The chain runs to 713 residues: Phenylalanine--tRNA ligase beta subunit (713 aa).

A tRNA-binding domain is found at 39 to 153 (IRHVENIKYG…EANLNEDPIA (115 aa)). The 76-residue stretch at 379–454 (LKPKEILFDH…RFYGYDNFPI (76 aa)) folds into the B5 domain. Mg(2+) contacts are provided by D432, D438, E441, and E442.

It belongs to the phenylalanyl-tRNA synthetase beta subunit family. Type 1 subfamily. Tetramer of two alpha and two beta subunits. It depends on Mg(2+) as a cofactor.

It is found in the cytoplasm. The catalysed reaction is tRNA(Phe) + L-phenylalanine + ATP = L-phenylalanyl-tRNA(Phe) + AMP + diphosphate + H(+). The polypeptide is Phenylalanine--tRNA ligase beta subunit (Mycoplasma mobile (strain ATCC 43663 / 163K / NCTC 11711) (Mesomycoplasma mobile)).